The primary structure comprises 499 residues: Maturase K (499 aa).

It belongs to the intron maturase 2 family. MatK subfamily.

It localises to the plastid. The protein localises to the chloroplast. Functionally, usually encoded in the trnK tRNA gene intron. Probably assists in splicing its own and other chloroplast group II introns. The sequence is that of Maturase K from Ceratozamia mexicana (Mexican horncone).